Consider the following 187-residue polypeptide: Ribosome-recycling factor (187 aa).

The protein belongs to the RRF family.

It localises to the cytoplasm. Responsible for the release of ribosomes from messenger RNA at the termination of protein biosynthesis. May increase the efficiency of translation by recycling ribosomes from one round of translation to another. The chain is Ribosome-recycling factor from Flavobacterium psychrophilum (strain ATCC 49511 / DSM 21280 / CIP 103535 / JIP02/86).